A 336-amino-acid chain; its full sequence is F420-dependent glucose-6-phosphate dehydrogenase (336 aa).

Asp-39 contacts coenzyme F420-(gamma-Glu)n. The active-site Proton donor is His-40. Coenzyme F420-(gamma-Glu)n is bound by residues Thr-76 and 107 to 108 (TG). Glu-109 functions as the Proton acceptor in the catalytic mechanism. Residues Asn-112, 177–178 (GG), and 180–181 (QV) each bind coenzyme F420-(gamma-Glu)n. Substrate-binding residues include Thr-195, Lys-198, Lys-259, and Arg-283.

The protein belongs to the F420-dependent glucose-6-phosphate dehydrogenase family. As to quaternary structure, homodimer.

It catalyses the reaction oxidized coenzyme F420-(gamma-L-Glu)(n) + D-glucose 6-phosphate + H(+) = 6-phospho-D-glucono-1,5-lactone + reduced coenzyme F420-(gamma-L-Glu)(n). Its function is as follows. Catalyzes the coenzyme F420-dependent oxidation of glucose 6-phosphate (G6P) to 6-phosphogluconolactone. Appears to have a role in resistance to oxidative stress, via its consumption of G6P that serves as a source of reducing power to combat oxidative stress in mycobacteria. This is F420-dependent glucose-6-phosphate dehydrogenase from Mycolicibacterium gilvum (strain PYR-GCK) (Mycobacterium gilvum (strain PYR-GCK)).